The following is a 392-amino-acid chain: Dual-specificity RNA methyltransferase RlmN (392 aa).

The active-site Proton acceptor is the glutamate 116. One can recognise a Radical SAM core domain in the interval 122–364; the sequence is EEGRGTLCVS…SPIRTPRGED (243 aa). Cysteine 129 and cysteine 369 form a disulfide bridge. Residues cysteine 136, cysteine 140, and cysteine 143 each contribute to the [4Fe-4S] cluster site. Residues 195-196, serine 227, 249-251, and asparagine 326 contribute to the S-adenosyl-L-methionine site; these read GE and SFH. Cysteine 369 serves as the catalytic S-methylcysteine intermediate.

The protein belongs to the radical SAM superfamily. RlmN family. [4Fe-4S] cluster is required as a cofactor.

The protein localises to the cytoplasm. It catalyses the reaction adenosine(2503) in 23S rRNA + 2 reduced [2Fe-2S]-[ferredoxin] + 2 S-adenosyl-L-methionine = 2-methyladenosine(2503) in 23S rRNA + 5'-deoxyadenosine + L-methionine + 2 oxidized [2Fe-2S]-[ferredoxin] + S-adenosyl-L-homocysteine. The enzyme catalyses adenosine(37) in tRNA + 2 reduced [2Fe-2S]-[ferredoxin] + 2 S-adenosyl-L-methionine = 2-methyladenosine(37) in tRNA + 5'-deoxyadenosine + L-methionine + 2 oxidized [2Fe-2S]-[ferredoxin] + S-adenosyl-L-homocysteine. Functionally, specifically methylates position 2 of adenine 2503 in 23S rRNA and position 2 of adenine 37 in tRNAs. m2A2503 modification seems to play a crucial role in the proofreading step occurring at the peptidyl transferase center and thus would serve to optimize ribosomal fidelity. The chain is Dual-specificity RNA methyltransferase RlmN from Cereibacter sphaeroides (strain ATCC 17029 / ATH 2.4.9) (Rhodobacter sphaeroides).